Here is a 444-residue protein sequence, read N- to C-terminus: tRNA-2-methylthio-N(6)-dimethylallyladenosine synthase (444 aa).

Positions 2–119 (KKLYIRTFGC…LPSMLNEVLT (118 aa)) constitute an MTTase N-terminal domain. Residues cysteine 11, cysteine 48, cysteine 82, cysteine 161, cysteine 165, and cysteine 168 each coordinate [4Fe-4S] cluster. A Radical SAM core domain is found at 147 to 379 (KTSSVTAFVS…QKTIDKNTER (233 aa)). A TRAM domain is found at 382–444 (KSMVGSVQKI…GNSLVGNLIA (63 aa)).

Belongs to the methylthiotransferase family. MiaB subfamily. Monomer. [4Fe-4S] cluster is required as a cofactor.

Its subcellular location is the cytoplasm. It catalyses the reaction N(6)-dimethylallyladenosine(37) in tRNA + (sulfur carrier)-SH + AH2 + 2 S-adenosyl-L-methionine = 2-methylsulfanyl-N(6)-dimethylallyladenosine(37) in tRNA + (sulfur carrier)-H + 5'-deoxyadenosine + L-methionine + A + S-adenosyl-L-homocysteine + 2 H(+). Functionally, catalyzes the methylthiolation of N6-(dimethylallyl)adenosine (i(6)A), leading to the formation of 2-methylthio-N6-(dimethylallyl)adenosine (ms(2)i(6)A) at position 37 in tRNAs that read codons beginning with uridine. The protein is tRNA-2-methylthio-N(6)-dimethylallyladenosine synthase of Ruthia magnifica subsp. Calyptogena magnifica.